A 253-amino-acid polypeptide reads, in one-letter code: Tryptophan synthase alpha chain (253 aa).

Active-site proton acceptor residues include Glu-45 and Asp-56.

Belongs to the TrpA family. As to quaternary structure, tetramer of two alpha and two beta chains.

It carries out the reaction (1S,2R)-1-C-(indol-3-yl)glycerol 3-phosphate + L-serine = D-glyceraldehyde 3-phosphate + L-tryptophan + H2O. It functions in the pathway amino-acid biosynthesis; L-tryptophan biosynthesis; L-tryptophan from chorismate: step 5/5. In terms of biological role, the alpha subunit is responsible for the aldol cleavage of indoleglycerol phosphate to indole and glyceraldehyde 3-phosphate. This chain is Tryptophan synthase alpha chain, found in Flavobacterium psychrophilum (strain ATCC 49511 / DSM 21280 / CIP 103535 / JIP02/86).